The chain runs to 71 residues: UPF0346 protein SZO_05010 (71 aa).

The protein belongs to the UPF0346 family.

The protein is UPF0346 protein SZO_05010 of Streptococcus equi subsp. zooepidemicus (strain H70).